A 476-amino-acid polypeptide reads, in one-letter code: Cytochrome c oxidase subunit 1 (476 aa).

The helical transmembrane segment at 19-39 (LYYLWFSFLFGIYGFLLSVIL) threads the bilayer. Ca(2+) is bound at residue Glu42. A run of 8 helical transmembrane segments spans residues 61–81 (MIFT…GLFG), 105–125 (ISLL…AAEF), 144–164 (LSPV…IASI), 194–214 (LIIT…GVLM), 240–260 (LLWF…FGII), 278–298 (MILA…HHMY), 309–329 (FFTS…FNWL), and 345–365 (LLSL…VILG). A Fe(II)-heme a-binding site is contributed by His66. His246 lines the Cu cation pocket. Residues 246-250 (HPEVY) constitute a cross-link (1'-histidyl-3'-tyrosine (His-Tyr)). Tyr250 serves as a coordination point for O2. Cu cation is bound by residues His295 and His296. His374 and Asp375 together coordinate Mg(2+). 2 consecutive transmembrane segments (helical) span residues 379-399 (VIAH…FTSV) and 415-435 (TIIV…FLPM). His382 contacts heme a3. Position 384 (His384) interacts with Fe(II)-heme a. Pro448 contacts Ca(2+). A helical transmembrane segment spans residues 455-475 (NGWNMICSIGSTMTLFGLLIF).

The protein belongs to the heme-copper respiratory oxidase family. Component of the cytochrome c oxidase (complex IV, CIV), a multisubunit enzyme composed of a catalytic core of 3 subunits and several supernumerary subunits. The complex exists as a monomer or a dimer and forms supercomplexes (SCs) in the inner mitochondrial membrane with ubiquinol-cytochrome c oxidoreductase (cytochrome b-c1 complex, complex III, CIII). Heme is required as a cofactor. Cu cation serves as cofactor.

The protein localises to the mitochondrion inner membrane. The catalysed reaction is 4 Fe(II)-[cytochrome c] + O2 + 8 H(+)(in) = 4 Fe(III)-[cytochrome c] + 2 H2O + 4 H(+)(out). It functions in the pathway energy metabolism; oxidative phosphorylation. Functionally, component of the cytochrome c oxidase, the last enzyme in the mitochondrial electron transport chain which drives oxidative phosphorylation. The respiratory chain contains 3 multisubunit complexes succinate dehydrogenase (complex II, CII), ubiquinol-cytochrome c oxidoreductase (cytochrome b-c1 complex, complex III, CIII) and cytochrome c oxidase (complex IV, CIV), that cooperate to transfer electrons derived from NADH and succinate to molecular oxygen, creating an electrochemical gradient over the inner membrane that drives transmembrane transport and the ATP synthase. Cytochrome c oxidase is the component of the respiratory chain that catalyzes the reduction of oxygen to water. Electrons originating from reduced cytochrome c in the intermembrane space (IMS) are transferred via the dinuclear copper A center (CU(A)) of subunit 2 and heme A of subunit 1 to the active site in subunit 1, a binuclear center (BNC) formed by heme A3 and copper B (CU(B)). The BNC reduces molecular oxygen to 2 water molecules using 4 electrons from cytochrome c in the IMS and 4 protons from the mitochondrial matrix. The polypeptide is Cytochrome c oxidase subunit 1 (COI) (Plasmodium chabaudi).